The primary structure comprises 119 residues: MSRVKRGVTAHAKHKKVYKAAKGFYGRRKNTIRAAKAAVEKAGQYAFRDRKRKKRTFRALWIQRLNAAVRPFELTYSRFIDGLSKSGITVDRKVLSDLAINEPAAFEAIVVKAKAALAA.

The protein belongs to the bacterial ribosomal protein bL20 family.

Functionally, binds directly to 23S ribosomal RNA and is necessary for the in vitro assembly process of the 50S ribosomal subunit. It is not involved in the protein synthesizing functions of that subunit. The protein is Large ribosomal subunit protein bL20 of Bradyrhizobium sp. (strain ORS 278).